The chain runs to 1520 residues: DNA topoisomerase 2 top-2 (1520 aa).

The span at 1–10 (MSDSDSEFSI) shows a compositional bias: acidic residues. Residues 1 to 40 (MSDSDSEFSIEDSPKKKTAPKKEKASPKKKKDDANESMVM) are disordered. The segment covering 12–34 (DSPKKKTAPKKEKASPKKKKDDA) has biased composition (basic and acidic residues). Residues Asn-126, Asn-155, 183–185 (SSN), 196–203 (GRNGYGAK), and 411–413 (QTK) contribute to the ATP site. In terms of domain architecture, Toprim spans 490–607 (CTLILTEGDS…SLIQRNFVEE (118 aa)). Mg(2+) contacts are provided by Glu-496, Asp-576, and Asp-578. Positions 750-1219 (IPCLVDGFKP…TWQDLWHEDL (470 aa)) constitute a Topo IIA-type catalytic domain. Residue Tyr-840 is the O-(5'-phospho-DNA)-tyrosine intermediate of the active site. Residues 1249-1520 (AADAKTGRGP…RGRVVDSDSD (272 aa)) form a disordered region. The span at 1283–1320 (TKAKYEKMSQPKKERVKKEPKEPKEPKKVKKEGQDIKK) shows a compositional bias: basic and acidic residues. Acidic residues predominate over residues 1342–1364 (MSEESDVEFDEGIDFDSDDDGVE).

It belongs to the type II topoisomerase family. Homodimer. Interacts with nmad-1; the interaction is required for localization of top-2 to DNA. Interacts with gcna-1; this interaction allows the resolution of topoisomerase 2 DNA-protein cross-links. Requires Mg(2+) as cofactor. The cofactor is Mn(2+). It depends on Ca(2+) as a cofactor. As to expression, expressed in the hermaphrodite and male germline.

It localises to the nucleus. It is found in the nucleoplasm. The protein localises to the chromosome. The protein resides in the cytoplasm. Its subcellular location is the cytoskeleton. It localises to the spindle. It carries out the reaction ATP-dependent breakage, passage and rejoining of double-stranded DNA.. Its function is as follows. Control of topological states of DNA by transient breakage and subsequent rejoining of DNA strands. Topoisomerase II makes double-strand breaks. Essential during mitosis in the adult germline and during embryogenesis for proper segregation of daughter chromosomes. Required for centromere resolution during mitosis. Required for chromosome segregation in anaphase of meiosis I during spermatogenesis. Promotes cleavage furrow stability during cytokinesis upon the presence of chromatin obstructions. Promotes DNA break formation upon zygotic genome activation in the Z2 and Z3 primordial germ cells in L1 larvae, thereby activating a checkpoint response. Essential for embryogenesis. The protein is DNA topoisomerase 2 top-2 of Caenorhabditis elegans.